We begin with the raw amino-acid sequence, 280 residues long: Rhomboid-like protein 11, chloroplastic (280 aa).

A chloroplast-targeting transit peptide spans 1 to 57; that stretch reads MSQLLHLHRLSLPQSSLRFRFPPLHRRRAASSPTNSTQPPLQFRPLTVSRSQITCRF. The Stromal portion of the chain corresponds to 58-82; that stretch reads SQSDITPQFELDKAKDNRKPQKRAN. Residues 83–103 form a helical membrane-spanning segment; it reads GIFWIILINLGIYLADHFFQV. The Chloroplast intermembrane segment spans residues 104 to 117; that stretch reads RGIKSLYLYHNFPA. A helical transmembrane segment spans residues 118–140; it reads WYQFVTATFCHANWNHLSSNLFF. Over 141-154 the chain is Stromal; that stretch reads LYIFGKLVEEEEGN. Residues 155-175 traverse the membrane as a helical segment; sequence FGLWLSYLFTGVGANLVSWLV. At 176–178 the chain is on the chloroplast intermembrane side; the sequence is LPR. The helical transmembrane segment at 179-199 threads the bilayer; it reads NAVSVGASGAVFGLFAISVLV. The Nucleophile role is filled by S186. The Stromal portion of the chain corresponds to 200–243; sequence KMSWDWRKILEVLILGQFVIERVMEAAQASAGLSGTIYGGYSLQ. Residues 244 to 264 form a helical membrane-spanning segment; it reads TVNHIAHLSGALVGVVLVWLL. Residue H250 is the Charge relay system of the active site. Over 265–280 the chain is Chloroplast intermembrane; sequence SKFPSASMDQDVKKSS.

Belongs to the peptidase S54 family. As to quaternary structure, homooligomer.

The protein resides in the plastid. It localises to the chloroplast inner membrane. Its function is as follows. Rhomboid-type serine protease that catalyzes intramembrane proteolysis. May be involved in TIC22 processing during its import. This chain is Rhomboid-like protein 11, chloroplastic, found in Arabidopsis thaliana (Mouse-ear cress).